The primary structure comprises 352 residues: Photosystem II D2 protein (352 aa).

The helical transmembrane segment at 40–60 (TAYLALGGWLTGTTFVTSWYT) threads the bilayer. Residue His117 participates in chlorophyll a binding. Residues 124–140 (GFMLRQFEIARLVGIRP) traverse the membrane as a helical segment. Pheophytin a-binding residues include Gln129 and Asn142. A helical transmembrane segment spans residues 152 to 165 (VFVSVFLIYPLGQS). His197 lines the chlorophyll a pocket. A helical transmembrane segment spans residues 207–227 (GALLCAIHGATVENTLFEDGE). The a plastoquinone site is built by His214 and Phe261. Residue His214 participates in Fe cation binding. His268 contributes to the Fe cation binding site. The helical transmembrane segment at 278-294 (GLWTSSIGIIGLALNLR) threads the bilayer.

Belongs to the reaction center PufL/M/PsbA/D family. PSII is composed of 1 copy each of membrane proteins PsbA, PsbB, PsbC, PsbD, PsbE, PsbF, PsbH, PsbI, PsbJ, PsbK, PsbL, PsbM, PsbT, PsbX, PsbY, PsbZ, Psb30/Ycf12, at least 3 peripheral proteins of the oxygen-evolving complex and a large number of cofactors. It forms dimeric complexes. It depends on The D1/D2 heterodimer binds P680, chlorophylls that are the primary electron donor of PSII, and subsequent electron acceptors. It shares a non-heme iron and each subunit binds pheophytin, quinone, additional chlorophylls, carotenoids and lipids. There is also a Cl(-1) ion associated with D1 and D2, which is required for oxygen evolution. The PSII complex binds additional chlorophylls, carotenoids and specific lipids. as a cofactor.

It is found in the plastid. Its subcellular location is the organellar chromatophore thylakoid membrane. It catalyses the reaction 2 a plastoquinone + 4 hnu + 2 H2O = 2 a plastoquinol + O2. Functionally, photosystem II (PSII) is a light-driven water:plastoquinone oxidoreductase that uses light energy to abstract electrons from H(2)O, generating O(2) and a proton gradient subsequently used for ATP formation. It consists of a core antenna complex that captures photons, and an electron transfer chain that converts photonic excitation into a charge separation. The D1/D2 (PsbA/PsbD) reaction center heterodimer binds P680, the primary electron donor of PSII as well as several subsequent electron acceptors. D2 is needed for assembly of a stable PSII complex. This is Photosystem II D2 protein from Paulinella chromatophora.